The following is a 113-amino-acid chain: MTDISVPLTFTDAAANKVKSLITDEENPNLKLRVYITGGGCSGFQYGFTFDEKVNEGDLTVENAGVQLVIDPMSLQYLIGGTVDYTEGLEGSRFVVQNPNASSTCGCGSSFSI.

Iron-sulfur cluster contacts are provided by C41, C105, and C107.

This sequence belongs to the HesB/IscA family. In terms of assembly, homodimer. Requires iron-sulfur cluster as cofactor.

Functionally, required for insertion of 4Fe-4S clusters for at least IspG. The polypeptide is Iron-sulfur cluster insertion protein ErpA (Actinobacillus succinogenes (strain ATCC 55618 / DSM 22257 / CCUG 43843 / 130Z)).